An 811-amino-acid chain; its full sequence is Protein VAC14 homolog (811 aa).

HEAT repeat units lie at residues 81-119 (DSYMESILLPVLYCFNDSDSKIRYYACESMYNIGKVAKG), 122-160 (FRYFNLIFDVLCKLFADTEITVKNGAELLDRLIKDIVMQ), 240-278 (ISYLPFLLDGLMNYLSDPNESIRIVTSNCLYDFLREIQK), 334-372 (QIDYKRILEIIIDHLGSSVPLIQEKALKWLFEFIYIAPK), 375-412 (LLQIPKVLENLLPLMSNDENMRQSAKDLSQNLVILVSK), 431-469 (SVDFRSLIEVLQKLLSNDNEETRLCALEWVLLLQRRTGG), and 472-510 (INMHDPIFQTLLLQLSDPSDLVVSRTLELLAHIAISHKS). The segment covering 775–785 (TSASGITTTAS) has biased composition (low complexity). The tract at residues 775–811 (TSASGITTTASNSRDSFITRLPPTAALSTGARKKPKQ) is disordered.

It belongs to the VAC14 family. In terms of assembly, component of the PI(3,5)P2 regulatory complex, composed of ATG18, FIG4, FAB1, VAC14 and VAC7. VAC14 nucleates the assembly of the complex and serves as a scaffold.

It localises to the cytoplasm. It is found in the vacuole membrane. Its function is as follows. The PI(3,5)P2 regulatory complex regulates both the synthesis and turnover of phosphatidylinositol 3,5-bisphosphate (PtdIns(3,5)P2). Regulates the synthesis of PtdIns(3,5)P2 by positive activation of FAB1 and by controlling FIG4 localization. In Schizosaccharomyces pombe (strain 972 / ATCC 24843) (Fission yeast), this protein is Protein VAC14 homolog.